Consider the following 436-residue polypeptide: GTPase Der (436 aa).

2 consecutive EngA-type G domains span residues 4–167 (PTVA…PVEE) and 175–351 (IRFS…ESQN). GTP-binding positions include 10–17 (GRPNVGKS), 57–61 (DTGGI), 119–122 (NKVD), 181–188 (GRPNVGKS), 229–233 (DTAGM), and 294–297 (NKWD). The 85-residue stretch at 352-436 (KRIPSAVLND…PIHLIARKRK (85 aa)) folds into the KH-like domain.

Belongs to the TRAFAC class TrmE-Era-EngA-EngB-Septin-like GTPase superfamily. EngA (Der) GTPase family. In terms of assembly, associates with the 50S ribosomal subunit.

Its function is as follows. GTPase that plays an essential role in the late steps of ribosome biogenesis. This is GTPase Der from Streptococcus pyogenes serotype M3 (strain ATCC BAA-595 / MGAS315).